A 136-amino-acid chain; its full sequence is uncharacterized protein (136 aa).

Disordered regions lie at residues 58-82 (TSDD…TTQT) and 112-136 (NNPK…VVTQ).

This is an uncharacterized protein from Dictyostelium discoideum (Social amoeba).